Reading from the N-terminus, the 236-residue chain is uncharacterized protein (236 aa).

This is an uncharacterized protein from Escherichia coli O157:H7.